The primary structure comprises 1902 residues: PII-type proteinase (1902 aa).

An N-terminal signal peptide occupies residues 1-33 (MQRKKKGLSILLAGTVALGALAVLPVGEIQAKA). Residues 34–187 (AISQQTKGSS…VTLAKVYYPT (154 aa)) constitute a propeptide that is removed on maturation. The region spanning 191-697 (ANSMANVQAV…AGLVDVKAAI (507 aa)) is the Peptidase S8 domain. Active-site charge relay system residues include D217, H281, and S620. Residues 1796–1874 (GKGDGTTGTS…GALPKTGETT (79 aa)) are disordered. Positions 1797 to 1812 (KGDGTTGTSDKGGGQG) are enriched in gly residues. The span at 1830 to 1843 (SQPSSGGNIPTNPA) shows a compositional bias: polar residues. An LPXTG sorting signal motif is present at residues 1867-1871 (LPKTG). Position 1870 is a pentaglycyl murein peptidoglycan amidated threonine (T1870). Positions 1871 to 1902 (GETTERPAFGFLGVIVVSLMGVLGLKRKQREE) are cleaved as a propeptide — removed by sortase.

It belongs to the peptidase S8 family.

It is found in the secreted. The protein resides in the cell wall. It carries out the reaction Endopeptidase activity with very broad specificity, although some subsite preference have been noted, e.g. large hydrophobic residues in the P1 and P4 positions, and Pro in the P2 position. Best known for its action on caseins, although it has been shown to hydrolyze hemoglobin and oxidized insulin B-chain.. Its function is as follows. Protease which breaks down milk proteins during the growth of the bacteria on milk. This Lactococcus lactis subsp. cremoris (Streptococcus cremoris) protein is PII-type proteinase (prt).